The primary structure comprises 340 residues: Annexin A2-B (340 aa).

Positions 2–25 (ALIHEILGKLSLEGNQSSSRQSKL) are P10 binding site. Phosphoserine; by PKC is present on Ser-27. Annexin repeat units follow at residues 34–105 (FDAE…GLIK), 106–177 (TRPQ…ALAK), 190–262 (EKID…NLVQ), and 266–337 (NKPL…NLCG).

This sequence belongs to the annexin family. As to quaternary structure, tetramer of 2 light chains (p10 proteins) and 2 heavy chains (p36 proteins). Adult brain, heart, striated muscle, liver, kidney, and very high levels in skin.

Its subcellular location is the secreted. The protein resides in the extracellular space. It localises to the extracellular matrix. The protein localises to the basement membrane. In terms of biological role, calcium-regulated membrane-binding protein whose affinity for calcium is greatly enhanced by anionic phospholipids. It binds two calcium ions with high affinity. In Xenopus laevis (African clawed frog), this protein is Annexin A2-B (anxa2-b).